The sequence spans 443 residues: Glucose-6-phosphate isomerase (443 aa).

Glu285 (proton donor) is an active-site residue. Active-site residues include His306 and Lys420.

Belongs to the GPI family.

It localises to the cytoplasm. It catalyses the reaction alpha-D-glucose 6-phosphate = beta-D-fructose 6-phosphate. It participates in carbohydrate biosynthesis; gluconeogenesis. The protein operates within carbohydrate degradation; glycolysis; D-glyceraldehyde 3-phosphate and glycerone phosphate from D-glucose: step 2/4. Catalyzes the reversible isomerization of glucose-6-phosphate to fructose-6-phosphate. The polypeptide is Glucose-6-phosphate isomerase (Staphylococcus haemolyticus (strain JCSC1435)).